Consider the following 429-residue polypeptide: Histidine--tRNA ligase (429 aa).

Belongs to the class-II aminoacyl-tRNA synthetase family. In terms of assembly, homodimer.

The protein resides in the cytoplasm. The enzyme catalyses tRNA(His) + L-histidine + ATP = L-histidyl-tRNA(His) + AMP + diphosphate + H(+). The protein is Histidine--tRNA ligase of Pseudomonas savastanoi pv. phaseolicola (strain 1448A / Race 6) (Pseudomonas syringae pv. phaseolicola (strain 1448A / Race 6)).